The sequence spans 427 residues: Acetylornithine aminotransferase, mitochondrial (427 aa).

At K279 the chain carries N6-(pyridoxal phosphate)lysine.

The protein belongs to the class-III pyridoxal-phosphate-dependent aminotransferase family. Pyridoxal 5'-phosphate is required as a cofactor.

It is found in the mitochondrion matrix. It catalyses the reaction N(2)-acetyl-L-ornithine + 2-oxoglutarate = N-acetyl-L-glutamate 5-semialdehyde + L-glutamate. Its pathway is amino-acid biosynthesis; L-arginine biosynthesis; N(2)-acetyl-L-ornithine from L-glutamate: step 4/4. The polypeptide is Acetylornithine aminotransferase, mitochondrial (ARG8) (Candida glabrata (strain ATCC 2001 / BCRC 20586 / JCM 3761 / NBRC 0622 / NRRL Y-65 / CBS 138) (Yeast)).